Consider the following 1703-residue polypeptide: Arf-GAP with Rho-GAP domain, ANK repeat and PH domain-containing protein 2 (1703 aa).

The SAM domain occupies 6–70 (EVNADIRDFL…LKQLQMIFSK (65 aa)). Tyr77 is subject to Phosphotyrosine. Disordered stretches follow at residues 84–132 (KNGS…LSEG), 191–232 (EEHT…NGTN), and 286–319 (PVPE…LTLK). Composition is skewed to polar residues over residues 85-103 (NGST…STHT), 123-132 (MVTTSTLSEG), and 197-214 (GNLT…NTEC). Over residues 222–232 (TSGTHSGNGTN) the composition is skewed to low complexity. Over residues 308-319 (NTTSAGKSLTLK) the composition is skewed to polar residues. PH domains follow at residues 480–572 (AKEK…SALK) and 585–677 (APEK…QSIA). An Arf-GAP domain is found at 674 to 809 (QSIAETLSDY…TLLASLTKEE (136 aa)). The C4-type zinc-finger motif lies at 698–721 (CADCKAPDPDWASINLCVVICKKC). PH domains are found at residues 899–1001 (QTAA…KRFV) and 1012–1110 (DYDL…KAAG). A Rho-GAP domain is found at 1114–1295 (NALQDQQLCK…DLINNYVEIF (182 aa)). Residues 1324–1418 (GDLLIEVFVE…AYLVVKRFLT (95 aa)) enclose the Ras-associating domain. In terms of domain architecture, PH 5 spans 1428–1531 (KSIKEGILKL…WMASIFIAQH (104 aa)). Phosphoserine is present on Ser1627. Disordered regions lie at residues 1633–1670 (DTEA…DPKL) and 1684–1703 (RSRP…KEVK). Basic and acidic residues-rich tracts occupy residues 1653–1670 (KKTE…DPKL) and 1688–1703 (LHKE…KEVK).

It is found in the cytoplasm. Functionally, phosphatidylinositol 3,4,5-trisphosphate-dependent GTPase-activating protein that modulates actin cytoskeleton remodeling by regulating ARF and RHO family members. Is activated by phosphatidylinositol 3,4,5-trisphosphate (PtdIns(3,4,5)P3) binding. Can be activated by phosphatidylinositol 3,4-bisphosphate (PtdIns(3,4,5)P2) binding, albeit with lower efficiency. The protein is Arf-GAP with Rho-GAP domain, ANK repeat and PH domain-containing protein 2 (Arap2) of Mus musculus (Mouse).